Here is a 333-residue protein sequence, read N- to C-terminus: CMP-N-acetylneuraminate-beta-galactosamide-alpha-2,3-sialyltransferase 4 (333 aa).

Topologically, residues 1-8 (MVSKSRWK) are cytoplasmic. The helical; Signal-anchor for type II membrane protein transmembrane segment at 9 to 26 (LLAMLALVLVVMVWYSIS) threads the bilayer. The Lumenal segment spans residues 27 to 333 (REDRYIELFY…MGAIKNLTSF (307 aa)). N-linked (GlcNAc...) asparagine glycosylation is found at asparagine 61, asparagine 131, asparagine 310, and asparagine 329. A disulfide bridge links cysteine 120 with cysteine 273.

Belongs to the glycosyltransferase 29 family. The soluble form derives from the membrane form by proteolytic processing. In terms of tissue distribution, highly expressed in adult placenta, heart and kidney.

The protein localises to the golgi apparatus. The protein resides in the golgi stack membrane. Its subcellular location is the secreted. It catalyses the reaction a beta-D-galactosyl-(1-&gt;3)-N-acetyl-beta-D-galactosaminyl derivative + CMP-N-acetyl-beta-neuraminate = an N-acetyl-alpha-neuraminyl-(2-&gt;3)-beta-D-galactosyl-(1-&gt;3)-N-acetyl-beta-D-galactosaminyl derivative + CMP + H(+). The enzyme catalyses a beta-D-galactosyl-(1-&gt;3)-N-acetyl-alpha-D-galactosaminyl derivative + CMP-N-acetyl-beta-neuraminate = an N-acetyl-alpha-neuraminyl-(2-&gt;3)-beta-D-galactosyl-(1-&gt;3)-N-acetyl-alpha-D-galactosaminyl derivative + CMP + H(+). It carries out the reaction a beta-D-galactosyl-(1-&gt;4)-N-acetyl-beta-D-glucosaminyl derivative + CMP-N-acetyl-beta-neuraminate = an N-acetyl-alpha-neuraminyl-(2-&gt;3)-beta-D-galactosyl-(1-&gt;4)-N-acetyl-beta-D-glucosaminyl derivative + CMP + H(+). The catalysed reaction is a ganglioside GM1 (d18:1(4E)) + CMP-N-acetyl-beta-neuraminate = a ganglioside GD1a (d18:1(4E)) + CMP + H(+). It catalyses the reaction a ganglioside GA1 (d18:1(4E)) + CMP-N-acetyl-beta-neuraminate = a ganglioside GM1b (d18:1(4E)) + CMP + H(+). The enzyme catalyses a ganglioside GT1c (d18:1(4E)) + CMP-N-acetyl-beta-neuraminate = a ganglioside GQ1c (d18:1(4E)) + CMP + H(+). It carries out the reaction a neolactoside nLc4Cer + CMP-N-acetyl-beta-neuraminate = a neolactoside IV(3)-alpha-NeuAc-nLc4Cer + CMP + H(+). The catalysed reaction is a neolactoside nLc4Cer(d18:1(4E)) + CMP-N-acetyl-beta-neuraminate = a neolactoside IV(3)-alpha-NeuAc-nLc4Cer(d18:1(4E)) + CMP + H(+). It participates in protein modification; protein glycosylation. Its pathway is glycolipid biosynthesis. Its function is as follows. A beta-galactoside alpha2-3 sialyltransferase involved in terminal sialylation of glycoproteins and glycolipids. Catalyzes the transfer of sialic acid (N-acetyl-neuraminic acid; Neu5Ac) from the nucleotide sugar donor CMP-Neu5Ac onto acceptor Galbeta-(1-&gt;3)-GalNAc- and Galbeta-(1-&gt;4)-GlcNAc-terminated glycoconjugates through an alpha2-3 linkage. Plays a major role in hemostasis. Responsible for sialylation of plasma VWF/von Willebrand factor, preventing its recognition by asialoglycoprotein receptors (ASGPR) and subsequent clearance. Regulates ASGPR-mediated clearance of platelets. Participates in the biosynthesis of the sialyl Lewis X epitopes, both on O- and N-glycans, which are recognized by SELE/E-selectin, SELP/P-selectin and SELL/L-selectin. Essential for selectin-mediated rolling and adhesion of leukocytes during extravasation. Contributes to adhesion and transendothelial migration of neutrophils likely through terminal sialylation of CXCR2. In glycosphingolipid biosynthesis, sialylates GM1 and GA1 gangliosides to form GD1a and GM1b, respectively. Metabolizes brain c-series ganglioside GT1c forming GQ1c. Synthesizes ganglioside LM1 (IV3Neu5Ac-nLc4Cer), a major structural component of peripheral nerve myelin. This Homo sapiens (Human) protein is CMP-N-acetylneuraminate-beta-galactosamide-alpha-2,3-sialyltransferase 4 (ST3GAL4).